The sequence spans 325 residues: Probable WRKY transcription factor 11 (325 aa).

Residues 240–306 constitute a DNA-binding region (WRKY); that stretch reads KIADIPPDEY…YEGEHRHNQS (67 aa).

This sequence belongs to the WRKY group II-d family. In terms of tissue distribution, in young, mature and senescent leaves.

It is found in the nucleus. Its function is as follows. Transcription factor. Interacts specifically with the W box (5'-(T)TGAC[CT]-3'), a frequently occurring elicitor-responsive cis-acting element. Regulates rhizobacterium B.cereus AR156-induced systemic resistance (ISR) to P.syringae pv. tomato DC3000, probably by activating the jasmonic acid (JA)- signaling pathway. This Arabidopsis thaliana (Mouse-ear cress) protein is Probable WRKY transcription factor 11 (WRKY11).